The sequence spans 952 residues: uncharacterized protein (952 aa).

The CheB-type methylesterase domain maps to 1-141; it reads MASLLARHTK…PWIADYLIRR (141 aa). The 273-residue stretch at 168–440 folds into the CheR-type methyltransferase domain; the sequence is VGQFDGLEPA…SARHRIWQAL (273 aa). A compositionally biased stretch (polar residues) spans 923–935; it reads HNQTEASPETSSG. Positions 923-952 are disordered; the sequence is HNQTEASPETSSGGLPGSDGTGADGGAPRA. Over residues 936–952 the composition is skewed to gly residues; it reads GLPGSDGTGADGGAPRA.

This is an uncharacterized protein from Rhodobacter capsulatus (Rhodopseudomonas capsulata).